The chain runs to 257 residues: Hydroxyethylthiazole kinase (257 aa).

Methionine 42 is a substrate binding site. Residues arginine 117 and threonine 163 each coordinate ATP. Residue alanine 190 coordinates substrate.

This sequence belongs to the Thz kinase family. Requires Mg(2+) as cofactor.

The catalysed reaction is 5-(2-hydroxyethyl)-4-methylthiazole + ATP = 4-methyl-5-(2-phosphooxyethyl)-thiazole + ADP + H(+). It functions in the pathway cofactor biosynthesis; thiamine diphosphate biosynthesis; 4-methyl-5-(2-phosphoethyl)-thiazole from 5-(2-hydroxyethyl)-4-methylthiazole: step 1/1. Functionally, catalyzes the phosphorylation of the hydroxyl group of 4-methyl-5-beta-hydroxyethylthiazole (THZ). The chain is Hydroxyethylthiazole kinase from Roseobacter denitrificans (strain ATCC 33942 / OCh 114) (Erythrobacter sp. (strain OCh 114)).